The chain runs to 928 residues: G-protein coupled receptor family C group 6 member A (928 aa).

Positions 1 to 20 are cleaved as a signal peptide; sequence MALLITVVTCFMIILDTSQS. Residues 21 to 594 lie on the Extracellular side of the membrane; sequence CHTPDDFVAI…EYLDWDDSLA (574 aa). N332, N555, and N567 each carry an N-linked (GlcNAc...) asparagine glycan. The helical transmembrane segment at 595-615 threads the bilayer; sequence LLLIALSLLGIAFVLAIGIIF. Residues 616 to 630 are Cytoplasmic-facing; that stretch reads TRNLKTPVVKSSGGL. The helical transmembrane segment at 631–651 threads the bilayer; the sequence is VVCYVMLICHALNFASTGFFI. At 652 to 669 the chain is on the extracellular side; the sequence is GEPQDFACKTRQTLFGVS. The helical transmembrane segment at 670–690 threads the bilayer; that stretch reads FTLCVSCILTKSLKILLAFSF. Residues 691 to 706 lie on the Cytoplasmic side of the membrane; the sequence is DPKLTMFLKCLYRPVP. The helical transmembrane segment at 707–727 threads the bilayer; the sequence is IVLTCTGIQVVICTLWLVLAA. Over 728–750 the chain is Extracellular; sequence PSVEENISLPRVIILECEEGSAL. Residues 751–771 traverse the membrane as a helical segment; that stretch reads AFGTMLGYITVLAFICFVFAF. Topologically, residues 772–784 are cytoplasmic; it reads KGRKLPENYNEAK. Residues 785–805 traverse the membrane as a helical segment; that stretch reads FLTFGMLIYFIAWITFIPVYT. The Extracellular segment spans residues 806 to 812; the sequence is TTFGKYL. Residues 813 to 833 traverse the membrane as a helical segment; the sequence is PAVEIIVILISNYGILCCIFF. Residues 834–928 are Cytoplasmic-facing; it reads PKCYIILCKQ…TLRQKRSSSI (95 aa).

Belongs to the G-protein coupled receptor 3 family. Homodimer; disulfide-linked. Post-translationally, N-glycosylated. Expressed at high level in liver, lung, spleen and heart. Expressed at lower level in kidney, skeletal muscle and brain. Expressed in 7 dpc, 11 dpc, 15 dpc and 17 dpc embryos.

The protein localises to the cell membrane. Functionally, receptor activated by multiple ligands, including osteocalcin (BGLAP), basic amino acids, and various cations. Activated by amino acids with a preference for basic amino acids such as L-Lys, L-Arg and L-ornithine but also by small and polar amino acids. The L-alpha amino acids respond is augmented by divalent cations Ca(2+) and Mg(2+). Seems to act through a G(q)/G(11) and G(i)-coupled pathway. Regulates testosterone production by acting as a ligand for uncarboxylated osteocalcin hormone: osteocalcin-binding at the surface of Leydig cells initiates a signaling response that promotes the expression of enzymes required for testosterone synthesis in a CREB-dependent manner. Mediates the non-genomic effects of androgens in multiple tissue. May coordinate nutritional and hormonal anabolic signals through the sensing of extracellular amino acids, osteocalcin, divalent ions and its responsiveness to anabolic steroids. This chain is G-protein coupled receptor family C group 6 member A (Gprc6a), found in Mus musculus (Mouse).